A 407-amino-acid chain; its full sequence is 3-oxoacyl-[acyl-carrier-protein] synthase 1 (407 aa).

The region spanning 1–405 is the Ketosynthase family 3 (KS3) domain; that stretch reads MKRVVITGLG…GTNVSLIIKK (405 aa). Catalysis depends on for beta-ketoacyl synthase activity residues Cys164, His299, and His335.

This sequence belongs to the thiolase-like superfamily. Beta-ketoacyl-ACP synthases family. Homodimer.

The protein localises to the cytoplasm. It catalyses the reaction a fatty acyl-[ACP] + malonyl-[ACP] + H(+) = a 3-oxoacyl-[ACP] + holo-[ACP] + CO2. It carries out the reaction (3Z)-decenoyl-[ACP] + malonyl-[ACP] + H(+) = 3-oxo-(5Z)-dodecenoyl-[ACP] + holo-[ACP] + CO2. Its pathway is lipid metabolism; fatty acid biosynthesis. In terms of biological role, involved in the type II fatty acid elongation cycle. Catalyzes the elongation of a wide range of acyl-ACP by the addition of two carbons from malonyl-ACP to an acyl acceptor. Can also use unsaturated fatty acids. Catalyzes a key reaction in unsaturated fatty acid (UFA) synthesis, the elongation of the cis-3-decenoyl-ACP produced by FabA. The sequence is that of 3-oxoacyl-[acyl-carrier-protein] synthase 1 (fabB) from Buchnera aphidicola subsp. Baizongia pistaciae (strain Bp).